The sequence spans 118 residues: Diacylglycerol kinase (118 aa).

Position 28 (Glu28) interacts with a divalent metal cation. 2 helical membrane-spanning segments follow: residues Thr29–Gly49 and Ile55–Val75. The active-site Proton acceptor is Glu69. Residue Glu76 participates in a divalent metal cation binding. Residues Ser98–Phe118 form a helical membrane-spanning segment.

Belongs to the bacterial diacylglycerol kinase family. Mg(2+) serves as cofactor.

It localises to the cell inner membrane. It catalyses the reaction a 1,2-diacyl-sn-glycerol + ATP = a 1,2-diacyl-sn-glycero-3-phosphate + ADP + H(+). Its function is as follows. Catalyzes the ATP-dependent phosphorylation of sn-l,2-diacylglycerol (DAG) to phosphatidic acid. Involved in the recycling of diacylglycerol produced as a by-product during membrane-derived oligosaccharide (MDO) biosynthesis. This chain is Diacylglycerol kinase (dgkA), found in Haemophilus influenzae (strain ATCC 51907 / DSM 11121 / KW20 / Rd).